Reading from the N-terminus, the 191-residue chain is MPSAPRKQSKTYKVPRRPFESARLDAELKLAGEYGLRNKHEIWRVALTLSKIRRAARELLTLDEKDPKRLFEGNAIIRRLVRLGILDETRMKLDYVLALRIEDFLERRLQTQVFKLGLAKSIHHARVLIFQRHIRVGKQIVNVPSFVVRLDTQKHIDFALSSPYGGGRPGRCKRKRLRSQEGGEGEEAEEE.

Phosphoserine occurs at positions 50 and 161. Positions arginine 107–glutamate 181 constitute an S4 RNA-binding domain. The residue at position 164 (tyrosine 164) is a Phosphotyrosine. A disordered region spans residues glycine 166–glutamate 191. Serine 179 carries the phosphoserine modification.

Belongs to the universal ribosomal protein uS4 family. As to quaternary structure, component of the small ribosomal subunit (SSU). Mature yeast ribosomes consist of a small (40S) and a large (60S) subunit. The 40S small subunit contains 1 molecule of ribosomal RNA (18S rRNA) and at least 33 different proteins. The large 60S subunit contains 3 rRNA molecules (25S, 5.8S and 5S rRNA) and at least 46 different proteins. Interacts with snoRNA U3. uS11 interacts with MPP10. Component of the ribosomal small subunit (SSU) processome composed of at least 40 protein subunits and snoRNA U3.

The protein localises to the cytoplasm. Functionally, component of the ribosome, a large ribonucleoprotein complex responsible for the synthesis of proteins in the cell. The small ribosomal subunit (SSU) binds messenger RNAs (mRNAs) and translates the encoded message by selecting cognate aminoacyl-transfer RNA (tRNA) molecules. The large subunit (LSU) contains the ribosomal catalytic site termed the peptidyl transferase center (PTC), which catalyzes the formation of peptide bonds, thereby polymerizing the amino acids delivered by tRNAs into a polypeptide chain. The nascent polypeptides leave the ribosome through a tunnel in the LSU and interact with protein factors that function in enzymatic processing, targeting, and the membrane insertion of nascent chains at the exit of the ribosomal tunnel. uS4 is involved in nucleolar processing of pre-18S ribosomal RNA and ribosome assembly. The polypeptide is Small ribosomal subunit protein uS4A (rps901) (Schizosaccharomyces pombe (strain 972 / ATCC 24843) (Fission yeast)).